Consider the following 97-residue polypeptide: Co-chaperonin GroES (97 aa).

Belongs to the GroES chaperonin family. Heptamer of 7 subunits arranged in a ring. Interacts with the chaperonin GroEL.

It is found in the cytoplasm. In terms of biological role, together with the chaperonin GroEL, plays an essential role in assisting protein folding. The GroEL-GroES system forms a nano-cage that allows encapsulation of the non-native substrate proteins and provides a physical environment optimized to promote and accelerate protein folding. GroES binds to the apical surface of the GroEL ring, thereby capping the opening of the GroEL channel. The protein is Co-chaperonin GroES of Pseudomonas savastanoi pv. phaseolicola (strain 1448A / Race 6) (Pseudomonas syringae pv. phaseolicola (strain 1448A / Race 6)).